Reading from the N-terminus, the 452-residue chain is FERM domain-containing protein 8 (452 aa).

The FERM domain occupies 28–374 (MDVIIYLIND…YCIELSQSTE (347 aa)). Over residues 373 to 387 (TESPASDSTPGNSQL) the composition is skewed to polar residues. A disordered region spans residues 373–395 (TESPASDSTPGNSQLSEKRSKLK).

It localises to the cytoplasm. The protein resides in the cytosol. It is found in the cell membrane. Its function is as follows. Promotes the cell surface stability of RHBDF1 and RHBDF2 and prevents their degradation via the endolysosomal pathway. By acting on RHBDF proteins, involved in ADAM17-mediated ligand shedding. May negatively regulate Wnt signaling. In Xenopus laevis (African clawed frog), this protein is FERM domain-containing protein 8 (frmd8).